Here is a 369-residue protein sequence, read N- to C-terminus: Ribonuclease D (369 aa).

Residues 4–168 form the 3'-5' exonuclease domain; that stretch reads EIITTTAQLH…CLEKLQQQLE (165 aa). The region spanning 207 to 286 is the HRDC domain; the sequence is DRQGLAIIKA…TQVISQDEST (80 aa).

The protein belongs to the RNase D family. A divalent metal cation is required as a cofactor.

It localises to the cytoplasm. The catalysed reaction is Exonucleolytic cleavage that removes extra residues from the 3'-terminus of tRNA to produce 5'-mononucleotides.. Its function is as follows. Exonuclease involved in the 3' processing of various precursor tRNAs. Initiates hydrolysis at the 3'-terminus of an RNA molecule and releases 5'-mononucleotides. This chain is Ribonuclease D, found in Psychromonas ingrahamii (strain DSM 17664 / CCUG 51855 / 37).